The following is a 421-amino-acid chain: Galactooligosaccharide-binding protein (421 aa).

The signal sequence occupies residues 1 to 22 (MKMAKKCSVFMLCAAVSLSLAA). A lipid anchor (N-palmitoyl cysteine) is attached at C23. A lipid anchor (S-diacylglycerol cysteine) is attached at C23. The tract at residues 393–421 (ATGKADPKQALDQAAETAKGQIKAKHSGK) is disordered.

It belongs to the bacterial solute-binding protein 1 family. As to quaternary structure, the complex is composed of two ATP-binding proteins (MsmX), two transmembrane proteins (GanP and GanQ) and a solute-binding protein (GanS).

Its subcellular location is the cell membrane. In terms of biological role, involved in galactan degradation. Part of the ABC transporter complex GanPQS involved in the uptake of galactooligosaccharides. Binds mainly galactotetraose and galactotriose. The chain is Galactooligosaccharide-binding protein from Bacillus subtilis (strain 168).